We begin with the raw amino-acid sequence, 506 residues long: Tabersonine 6,7-epoxidase isoform 1 (506 aa).

The chain crosses the membrane as a helical span at residues 1 to 21 (MEFVVSLFAFVVSCFILLKVA). 2 N-linked (GlcNAc...) asparagine glycosylation sites follow: Asn173 and Asn261. Cys441 is a binding site for heme.

This sequence belongs to the cytochrome P450 family. The cofactor is heme. As to expression, mainly expressed in roots.

It is found in the endoplasmic reticulum membrane. The catalysed reaction is (-)-tabersonine + reduced [NADPH--hemoprotein reductase] + O2 = lochnericine + oxidized [NADPH--hemoprotein reductase] + H2O + H(+). It participates in alkaloid biosynthesis. In terms of biological role, component of the monoterpenoid indole alkaloids (MIAs, e.g. echitovenine, tabersonine, lochnericine, 19-hydroxytabersonine and horhammericine) biosynthetic pathway; MIAs are used in cancer treatment and other medical applications. Cytochrome P450 catalyzing the conversion of tabersonine to lochnericine. The polypeptide is Tabersonine 6,7-epoxidase isoform 1 (Catharanthus roseus (Madagascar periwinkle)).